We begin with the raw amino-acid sequence, 1056 residues long: Contactin-5 (1056 aa).

The segment covering 1–14 has biased composition (low complexity); sequence MKADSSSSSSMSSR. Positions 1–33 are disordered; the sequence is MKADSSSSSSMSSRMRLRNSHGVGSSSQDWSPF. The segment covering 22–31 has biased composition (polar residues); sequence GVGSSSQDWS. Ig-like C2-type domains follow at residues 57–142, 154–240, 258–343, 348–432, 438–519, and 527–622; these read PVFI…IVLS, PFSG…RVLS, PKIE…GHLQ, PQWI…AELK, PMFN…AELT, and PMRV…AELL. Intrachain disulfides connect Cys-81–Cys-131, Cys-175–Cys-227, and Cys-280–Cys-327. Asn-96 and Asn-119 each carry an N-linked (GlcNAc...) asparagine glycan. Residue Asn-355 is glycosylated (N-linked (GlcNAc...) asparagine). 3 disulfide bridges follow: Cys-369-Cys-416, Cys-459-Cys-507, and Cys-549-Cys-606. N-linked (GlcNAc...) asparagine glycans are attached at residues Asn-489 and Asn-496. 4 Fibronectin type-III domains span residues 629 to 727, 732 to 829, 834 to 928, and 933 to 1023; these read PPGV…TKEA, APAN…SAEG, PPSE…TKKN, and PPGN…TSSG. Positions 711–736 are disordered; it reads GTGDPSPPSRAVRTKEAVPSVAPANV. N-linked (GlcNAc...) asparagine glycans are attached at residues Asn-772, Asn-887, Asn-945, and Asn-958. A lipid anchor (GPI-anchor amidated asparagine) is attached at Asn-1035. A propeptide spans 1036–1056 (removed in mature form); the sequence is SPPGLAWTALFLSLMVPSFPL.

The protein belongs to the immunoglobulin superfamily. Contactin family.

The protein resides in the cell membrane. Functionally, contactins mediate cell surface interactions during nervous system development. The polypeptide is Contactin-5 (cntn5) (Danio rerio (Zebrafish)).